The chain runs to 450 residues: tRNA modification GTPase MnmE (450 aa).

The (6S)-5-formyl-5,6,7,8-tetrahydrofolate site is built by Arg25, Glu86, and Arg126. The 153-residue stretch at 221-373 folds into the TrmE-type G domain; that stretch reads GLRVALVGRP…LVQALLERCG (153 aa). Asn231 is a binding site for K(+). GTP contacts are provided by residues 231–236, 250–256, 275–278, and 336–339; these read NVGKSS, TELPGTT, DTAG, and NKAD. Ser235 is a binding site for Mg(2+). Residues Thr250, Leu252, and Thr255 each coordinate K(+). Thr256 serves as a coordination point for Mg(2+). A (6S)-5-formyl-5,6,7,8-tetrahydrofolate-binding site is contributed by Lys450.

It belongs to the TRAFAC class TrmE-Era-EngA-EngB-Septin-like GTPase superfamily. TrmE GTPase family. As to quaternary structure, homodimer. Heterotetramer of two MnmE and two MnmG subunits. It depends on K(+) as a cofactor.

Its subcellular location is the cytoplasm. Its function is as follows. Exhibits a very high intrinsic GTPase hydrolysis rate. Involved in the addition of a carboxymethylaminomethyl (cmnm) group at the wobble position (U34) of certain tRNAs, forming tRNA-cmnm(5)s(2)U34. The chain is tRNA modification GTPase MnmE from Parasynechococcus marenigrum (strain WH8102).